Consider the following 1679-residue polypeptide: Lysophospholipase NTE1 (1679 aa).

Residues 1–20 (MRSMNCTTNNTNNTGQNTKN) are compositionally biased toward low complexity. The interval 1–21 (MRSMNCTTNNTNNTGQNTKNS) is disordered. The Cytoplasmic segment spans residues 1–49 (MRSMNCTTNNTNNTGQNTKNSLGSSFNSSNYTSYRFQTCLTDQIISEAQ). A helical transmembrane segment spans residues 50-70 (TWSLSSLFNFSWVVSYFVMGA). Residues 71–103 (SRMIFRYGWYLATLSLLRIPKWIFFKLHHVQFT) lie on the Lumenal side of the membrane. A helical membrane pass occupies residues 104–124 (LSFWLILFALAVIVFVTYTIM). Over 125–1679 (KERILSQYKR…EFLLHRRNSI (1555 aa)) the chain is Cytoplasmic. The segment covering 261-274 (SDKDHGDETDHSDT) has biased composition (basic and acidic residues). Residues 261 to 304 (SDKDHGDETDHSDTDGLDDQDRDEEDEEEDDDIDNYDTKSCSSN) form a disordered region. Over residues 275-295 (DGLDDQDRDEEDEEEDDDIDN) the composition is skewed to acidic residues. Residues S300 and S312 each carry the phosphoserine modification. 2 disordered regions span residues 498 to 527 (SSGS…KPSD) and 586 to 672 (DILS…VSPR). Polar residues-rich tracts occupy residues 592 to 606 (PIHN…GINT) and 630 to 652 (FSSL…LDNT). A phosphoserine mark is found at S632, S634, S653, S661, S670, S680, and S739. The segment at 775–800 (KEYTISNKRHNKSKSQDKKKPRAYKE) is disordered. Residues 788–800 (KSQDKKKPRAYKE) are compositionally biased toward basic and acidic residues. A Phosphothreonine modification is found at T803. A nucleoside 3',5'-cyclic phosphate-binding positions include 803-947 (TPNL…LTKL) and 943-1074 (SLTK…VAKK). A disordered region spans residues 855 to 882 (SSSVVSSMSKPEQVSAQSSHKGENPHHT). Positions 862 to 873 (MSKPEQVSAQSS) are enriched in polar residues. One can recognise a PNPLA domain in the interval 1373-1537 (LVLGGGGARG…VDNLPVTEMR (165 aa)). The GXGXXG signature appears at 1377–1382 (GGGARG). The GXSXG signature appears at 1404-1408 (GTSIG). S1406 (nucleophile) is an active-site residue. D1524 acts as the Proton acceptor in catalysis. A DGA/G motif is present at residues 1524-1526 (DGG).

The protein belongs to the NTE family.

The protein resides in the endoplasmic reticulum membrane. Its subcellular location is the lipid droplet. It carries out the reaction a 1-acyl-sn-glycero-3-phosphocholine + H2O = sn-glycerol 3-phosphocholine + a fatty acid + H(+). The enzyme catalyses a 1,2-diacyl-sn-glycero-3-phosphocholine + 2 H2O = sn-glycerol 3-phosphocholine + 2 a carboxylate + 2 H(+). Positively regulated by SEC14. Inhibited by organophosphorus esters in the order phenyl saligenin phosphate (PSP) &gt; phenyldipentyl phosphinate (PDPP) = diisopropyl fluorophosphate (DFP) &gt; and paraoxon (PXN). Its function is as follows. Intracellular phospholipase B that catalyzes the double deacylation of phosphatidylcholine (PC) to glycerophosphocholine (GroPCho). Plays an important role in membrane lipid homeostasis. Responsible for the rapid PC turnover in response to inositol, elevated temperatures, or when choline is present in the growth medium. NTE1 activity impacts the repressing transcriptional activity of OPI1, the main regulator of phospholipid synthesis gene transcription. The protein is Lysophospholipase NTE1 (NTE1) of Saccharomyces cerevisiae (strain ATCC 204508 / S288c) (Baker's yeast).